Here is a 249-residue protein sequence, read N- to C-terminus: MIRILVSNDDGVNAPGIKALTEALTEIATVLTVGPDRNCSGASNSLTLTNPLRINRLDNGYISVHGTPTDCVHLAIRELYDGEPDMVVSGINAGANMGDDTLYSGTVAAAMEGRFLGFPAVAISLNGRKFEHYQSAAVYARRIVQGLLAQPLAKDQILNVNVPDLPLDQIKGIKVTRLGARHKAEGIVRTQDPAGREIFWLGPPGQEQDATEGTDFHAIANGYVSITPLTVDLTAYGQLTALQNWVDKI.

4 residues coordinate a divalent metal cation: aspartate 9, aspartate 10, serine 40, and asparagine 92.

The protein belongs to the SurE nucleotidase family. It depends on a divalent metal cation as a cofactor.

Its subcellular location is the cytoplasm. It carries out the reaction a ribonucleoside 5'-phosphate + H2O = a ribonucleoside + phosphate. In terms of biological role, nucleotidase that shows phosphatase activity on nucleoside 5'-monophosphates. In Shewanella baltica (strain OS223), this protein is 5'-nucleotidase SurE.